A 604-amino-acid chain; its full sequence is MAKESGISLKEIQVLARQWKVGPEKRVPAMPGSPVEVKIQSRSSPPTMPPLPPINPGGPRPVSFTPTALSNGINHSPPTLNGAPSPPQRFSNGPASSTSSALTNQQLPATCGARQLSKLKRFLTTLQQFGNDISPEIGEKVRTLVLALVNSTVTIEEFHCKLQEATNFPLRPFVIPFLKANLPLLQRELLHCARAAKQTPSQYLAQHEHLLLNTSIASPADSSELLMEVHGNGKRPSPERREENSFDRDTIAPEPPAKRVCTISPAPRHSPALTVPLMNPGGQFHPTPPPLQHYTLEDIATSHLYREPNKMLEHREVRDRHHSLGLNGGYQDELVDHRLTEREWADEWKHLDHALNCIMEMVEKTRRSMAVLRRCQESDREELNYWKRRYNENTELRKTGTELVSRQHSPGSADSLSNDSQREFNSRPGTGYVPVEFWKKTEEAVNKVKIQAMSEVQKAVAEAEQKAFEVIATERARMEQTIADVKRQAAEDAFLVINEQEESTENCWNCGRKASETCSGCNIARYCGSFCQHKDWERHHRLCGQNLHGQSPHGQGRPLLPVGRGSSARSADCSVPSPALDKTSATTSRSSTPASVTAIDTNGL.

Positions 25–105 (KRVPAMPGSP…SSTSSALTNQ (81 aa)) are disordered. Ser33 bears the Phosphoserine mark. Lys38 participates in a covalent cross-link: Glycyl lysine isopeptide (Lys-Gly) (interchain with G-Cter in SUMO2). A compositionally biased stretch (pro residues) spans 46–59 (PTMPPLPPINPGGP). Composition is skewed to polar residues over residues 64-79 (FTPT…SPPT) and 88-105 (QRFS…LTNQ). The segment at 107–215 (LPATCGARQL…QHEHLLLNTS (109 aa)) is interaction with PRDM14. The TAFH domain maps to 113–208 (ARQLSKLKRF…TPSQYLAQHE (96 aa)). The disordered stretch occupies residues 229–265 (VHGNGKRPSPERREENSFDRDTIAPEPPAKRVCTISP). Over residues 236–251 (PSPERREENSFDRDTI) the composition is skewed to basic and acidic residues. Ser264 carries the phosphoserine modification. The nervy homology region 2 (NHR2) stretch occupies residues 331 to 377 (QDELVDHRLTEREWADEWKHLDHALNCIMEMVEKTRRSMAVLRRCQE). Residues 397–427 (RKTGTELVSRQHSPGSADSLSNDSQREFNSR) form a disordered region. Positions 402-419 (ELVSRQHSPGSADSLSND) are enriched in polar residues. Ser409 carries the post-translational modification Phosphoserine. The segment at 435-484 (VEFWKKTEEAVNKVKIQAMSEVQKAVAEAEQKAFEVIATERARMEQTIAD) is nervy homology region 3 (NHR3). Lys449 is covalently cross-linked (Glycyl lysine isopeptide (Lys-Gly) (interchain with G-Cter in SUMO2)). Positions 451–491 (QAMSEVQKAVAEAEQKAFEVIATERARMEQTIADVKRQAAE) form a coiled coil. Zn(2+) is bound by residues Cys507, Cys510, Cys518, Cys521, Cys527, Cys531, His539, and Cys543. Residues 507–543 (CWNCGRKASETCSGCNIARYCGSFCQHKDWERHHRLC) form an MYND-type zinc finger. The disordered stretch occupies residues 547–604 (LHGQSPHGQGRPLLPVGRGSSARSADCSVPSPALDKTSATTSRSSTPASVTAIDTNGL). Phosphoserine is present on Ser577. Residues 583–598 (TSATTSRSSTPASVTA) are compositionally biased toward low complexity.

The protein belongs to the CBFA2T family. Homooligomer. Homotetramerization is mediated by nervy homology region 2. Can interact with RUNX1T1/CBFA2T1 and CBFA2T3/MTG16; heterotetramerization between members of the CBFA2T family is proposed. Forms a heterooligomer with the AML1-MTG8/ETO fusion protein. Interacts with PRDM14. Interacts with RBPJ, GFI1, TCF4. Interacts with TAL1 and CBFA2T3/MTG16; the heteromer with CBFA2T3/MTG16 may function in repression of TAL1. Ubiquitously expressed in fetal and adult tissues. Highly expressed in adult brain, heart, lung, kidney, lymph node, appendix, thymus, testis, uterus, small intestine, prostate and thymus.

The protein localises to the nucleus. In terms of biological role, transcriptional corepressor which facilitates transcriptional repression via its association with DNA-binding transcription factors and recruitment of other corepressors and histone-modifying enzymes. Via association with PRDM14 is involved in regulation of embryonic stem cell (ESC) pluripotency. Involved in primordial germ cell (PCG) formation. Stabilizes PRDM14 and OCT4 on chromatin in a homooligomerization-dependent manner. Can repress the expression of MMP7 in a ZBTB33-dependent manner. May function as a complex with the chimeric protein RUNX1/AML1-CBFA2T1/MTG8 (AML1-MTG8/ETO fusion protein) which is produced in acute myeloid leukemia with the chromosomal translocation t(8;21). May thus be involved in the repression of AML1-dependent transcription and the induction of G-CSF/CSF3-dependent cell growth. May be a tumor suppressor gene candidate involved in myeloid tumors with the deletion of the 20q11 region. Through heteromerization with CBFA2T3/MTG16 may be involved in regulation of the proliferation and the differentiation of erythroid progenitors by repressing the expression of TAL1 target genes. Required for the maintenance of the secretory cell lineage in the small intestine. Can inhibit Notch signaling probably by association with RBPJ and may be involved in GFI1-mediated Paneth cell differentiation. The sequence is that of Protein CBFA2T2 (CBFA2T2) from Homo sapiens (Human).